The following is a 942-amino-acid chain: Protein inturned (942 aa).

2 disordered regions span residues Met1–Leu56 and Leu128–Val156. Acidic residues predominate over residues Ser22 to Ser32. The segment covering Asp33–Asp48 has biased composition (low complexity). Over residues Ser137–Val156 the composition is skewed to polar residues. The region spanning Leu185–Asn267 is the PDZ domain. Phosphoserine is present on residues Ser674 and Ser678. The tract at residues Lys707–Asp751 is disordered.

The protein belongs to the inturned family. As to quaternary structure, component of the CPLANE (ciliogenesis and planar polarity effectors) complex, composed of INTU, FUZ and WDPCP. Interacts with CPLANE1. Interacts with NPHP4 and DAAM1; INTU is mediating the interaction between NPHP4 and DAAM1. As to expression, widely expressed in E8.5 and E9.5 wild type embryos. Present in various adult organs (at protein level).

Its subcellular location is the cytoplasm. It localises to the cell surface. The protein localises to the cytoskeleton. It is found in the cilium basal body. The protein resides in the microtubule organizing center. Its subcellular location is the centrosome. It localises to the centriole. Plays a key role in ciliogenesis and embryonic development. Regulator of cilia formation by controlling the organization of the apical actin cytoskeleton and the positioning of the basal bodies at the apical cell surface, which in turn is essential for the normal orientation of elongating ciliary microtubules. Plays a key role in definition of cell polarity via its role in ciliogenesis but not via conversion extension. Has an indirect effect on hedgehog signaling. Proposed to function as core component of the CPLANE (ciliogenesis and planar polarity effectors) complex involved in the recruitment of peripheral IFT-A proteins to basal bodies. Required for recruitment of CPLANE2 to the mother centriole. Binds phosphatidylinositol 3-phosphate with highest affinity, followed by phosphatidylinositol 4-phosphate and phosphatidylinositol 5-phosphate. The chain is Protein inturned (Intu) from Mus musculus (Mouse).